The sequence spans 98 residues: Integration host factor subunit alpha (98 aa).

A disordered region spans residues 49 to 71 (FGNFDLRDKNQRPGRNPKTGEDI).

This sequence belongs to the bacterial histone-like protein family. As to quaternary structure, heterodimer of an alpha and a beta chain.

This protein is one of the two subunits of integration host factor, a specific DNA-binding protein that functions in genetic recombination as well as in transcriptional and translational control. This is Integration host factor subunit alpha from Pectobacterium atrosepticum (strain SCRI 1043 / ATCC BAA-672) (Erwinia carotovora subsp. atroseptica).